Reading from the N-terminus, the 216-residue chain is Probable nicotinate-nucleotide adenylyltransferase (216 aa).

Belongs to the NadD family.

The catalysed reaction is nicotinate beta-D-ribonucleotide + ATP + H(+) = deamido-NAD(+) + diphosphate. Its pathway is cofactor biosynthesis; NAD(+) biosynthesis; deamido-NAD(+) from nicotinate D-ribonucleotide: step 1/1. In terms of biological role, catalyzes the reversible adenylation of nicotinate mononucleotide (NaMN) to nicotinic acid adenine dinucleotide (NaAD). The sequence is that of Probable nicotinate-nucleotide adenylyltransferase from Geobacillus thermodenitrificans (strain NG80-2).